We begin with the raw amino-acid sequence, 314 residues long: MNQKPTAIFLMGPTASGKTDLAIQLRQELPVEVISVDSALIYKGMDIGTAKPSKEELALAPHRLIDIIDPAESYSAANFRSDALREMADITEQGRIPLLVGGTMLYYKALLEGLSPLPQADEKVRSKIEEKAQKFGWATLHKELSLIDPVSAARINPNDSQRINRALEVFYISGKSMTELTEQKGEQLPYHILQFAIAPEDRAILHRRIEMRFHKMIESGFKQEVERLYHRGDLHIDLPSIRCVGYRQMWEHLRGDYDLDEAVFRGICATRQLAKRQITWLRGWKYPIQWLDSLKNSENKEIIKRAFDLTMQNG.

An ATP-binding site is contributed by 12–19 (GPTASGKT). Residue 14-19 (TASGKT) participates in substrate binding. Interaction with substrate tRNA stretches follow at residues 37-40 (DSAL), 161-165 (QRINR), 242-247 (RCVGYR), and 275-282 (KRQITWLR).

This sequence belongs to the IPP transferase family. Monomer. Mg(2+) serves as cofactor.

The catalysed reaction is adenosine(37) in tRNA + dimethylallyl diphosphate = N(6)-dimethylallyladenosine(37) in tRNA + diphosphate. In terms of biological role, catalyzes the transfer of a dimethylallyl group onto the adenine at position 37 in tRNAs that read codons beginning with uridine, leading to the formation of N6-(dimethylallyl)adenosine (i(6)A). This chain is tRNA dimethylallyltransferase, found in Mannheimia succiniciproducens (strain KCTC 0769BP / MBEL55E).